Reading from the N-terminus, the 349-residue chain is Selenide, water dikinase (349 aa).

Residue Cys17 is part of the active site. ATP-binding positions include Lys20 and 48–50 (YFD). Asp51 lines the Mg(2+) pocket. ATP contacts are provided by residues Asp68, Asp91, and 139–141 (GHS). Residue Asp91 coordinates Mg(2+). Asp229 is a binding site for Mg(2+).

It belongs to the selenophosphate synthase 1 family. Class I subfamily. In terms of assembly, homodimer. It depends on Mg(2+) as a cofactor.

It carries out the reaction hydrogenselenide + ATP + H2O = selenophosphate + AMP + phosphate + 2 H(+). Its function is as follows. Synthesizes selenophosphate from selenide and ATP. The sequence is that of Selenide, water dikinase from Nitrosomonas eutropha (strain DSM 101675 / C91 / Nm57).